A 219-amino-acid chain; its full sequence is PKHD-type hydroxylase AM1_3707 (219 aa).

The Fe2OG dioxygenase domain occupies 78–172; the sequence is SIHTLLFSRY…RLVAVGWVQS (95 aa). Fe cation contacts are provided by H96, D98, and H153. R163 provides a ligand contact to 2-oxoglutarate.

Fe(2+) is required as a cofactor. It depends on L-ascorbate as a cofactor.

The protein is PKHD-type hydroxylase AM1_3707 of Acaryochloris marina (strain MBIC 11017).